The following is a 528-amino-acid chain: MTKSHSEEVIVPEFNSSAKELPRPLAEKCPSIIKKFISAYDAKPDFVARSPGRVNLIGEHIDYCDFSVLPLAIDFDMLCAVKVLNEKNPSITLINADPKFAQRKFDLPLDGSYVTIDPSVSDWSNYFKCGLHVAHSFLKKLAPERFASAPLAGLQVFCEGDVPTGSGLSSSAAFICAVALAVVKANMGPGYHMSKQNLMRITVVAEHYVGVNNGGMDQAASVCGEEDHALYVEFKPQLKATPFKFPQLKNHEISFVIANTLVVSNKFETAPTNYNLRVVEVTTAANVLAATYGVVLLSGKEGSSTNKGNLRDFMNVYYARYHNISTPWNGDIESGIERLTKMLVLVEESLANKKQGFSVDDVAQSLNCSREEFTRDYLTTSPVRFQVLKLYQRAKHVYSESLRVLKAVKLMTTASFTADEDFFKQFGALMNESQASCDKLYECSCPEIDKICSIALSNGSYGSRLTGAGWGGCTVHLVPGGPNGNIEKVKEALANEFYKVKYPKITDAELENAIIVSKPALGSCLYEL.

Residues R53, E59, H60, and D62 each contribute to the alpha-D-galactose site. ATP contacts are provided by G165, G167, S169, and S170. The alpha-D-galactose site is built by N213 and D217. The Proton acceptor role is filled by D217. 3 residues coordinate ATP: S264, N265, and K266. Y274 is a binding site for alpha-D-galactose. Position 381 is a phosphoserine (S381).

The protein belongs to the GHMP kinase family. GalK subfamily.

The enzyme catalyses alpha-D-galactose + ATP = alpha-D-galactose 1-phosphate + ADP + H(+). The protein operates within carbohydrate metabolism; galactose metabolism. In terms of biological role, galactokinase is a key enzyme in the galactose metabolism where it catalyzes the conversion of alpha-D-galactose to galactose 1-phosphate. Can also induce the transcription of the yeast GAL genes in response to the organism being challenged with galactose as the sole source of carbon. It's striking amino acid sequence similarity to GAL3 might explain its GAL3-like induction activity. The sequence is that of Galactokinase from Saccharomyces cerevisiae (strain ATCC 204508 / S288c) (Baker's yeast).